The chain runs to 376 residues: MESYDVIANQPVVIDNGSGVIKAGFAGDQIPKYCFPNYVGRPKHVRVMAGALEGDIFIGPKAEEHRGLLSIRYPMEHGIVKDWNDMERIWQYVYSKDQLQTFSEEHPVLLTEAPLNPRKNRERAAEVFFETFNVPALFISMQAVLSLYATGRTTGVVLDSGDGVTHAVPIYEGFAMPHSIMRIDIAGRDVSRFLRLYLRKEGYDFHSSSEFEIVKAIKERACYLSINPQKDETLETEKAQYYLPDGSTIEIGPSRFRAPELLFRPDLIGEESEGIHEVLVFAIQKSDMDLRRTLFSNIVLSGGSTLFKGFGDRLLSEVKKLAPKDVKIRISAPQERLYSTWIGGSILASLDTFKKMWVSKKEYEEDGARSIHRKTF.

N-acetylmethionine is present on Met-1.

The protein belongs to the actin family. ARP1 subfamily. Part of the ACTR1A/ACTB filament around which the dynactin complex is built. The filament contains 8 copies of ACTR1A and 1 ACTB. Interacts with dynein and adapters such as BICD2. Interacts with BCCIP (isoform 2/alpha).

The protein localises to the cytoplasm. It is found in the cytoskeleton. Its subcellular location is the microtubule organizing center. It localises to the centrosome. The protein resides in the cell cortex. In terms of biological role, part of the ACTR1A/ACTB filament around which the dynactin complex is built. The dynactin multiprotein complex activates the molecular motor dynein for ultra-processive transport along microtubules. In Canis lupus familiaris (Dog), this protein is Alpha-centractin (ACTR1A).